The following is a 632-amino-acid chain: Nucleoside triphosphatase I (632 aa).

The region spanning 42-204 (FLGLDKMHSL…IMLVNLLRPK (163 aa)) is the Helicase ATP-binding domain. Position 55 to 62 (55 to 62 (HETGVGKT)) interacts with ATP. Positions 141-144 (DECH) match the DEXH box motif. Positions 367 to 532 (KFTDVCLRIL…EFTQLFKVFK (166 aa)) constitute a Helicase C-terminal domain. The segment at 457-524 (DIFILDMTWN…DIIRNKSKEF (68 aa)) is binding to the cap-specific mRNA (nucleoside-2'-O-)-methyltransferase.

Belongs to the helicase family. NPH I subfamily. As to quaternary structure, monomer. Interacts (via C-terminus) with RAP94 (via N-terminus). Interacts with the cap-specific mRNA (nucleoside-2'-O-)-methyltransferase.

It is found in the virion. The enzyme catalyses a ribonucleoside 5'-triphosphate + H2O = a ribonucleoside 5'-diphosphate + phosphate + H(+). In terms of biological role, DNA-dependent ATPase required for providing the needed energy to achieve the termination of early transcripts. Acts in concert with the RAP94 subunit of the virion RNA polymerase and the capping enzyme/VTF to catalyze release of UUUUUNU-containing nascent RNA from the elongation complex. NPH-I must bind ssDNA in order to exhibit ATPase activity. The polypeptide is Nucleoside triphosphatase I (NPH1) (Rabbit fibroma virus (strain Kasza) (RFV)).